Consider the following 673-residue polypeptide: Leucine zipper putative tumor suppressor 3 (673 aa).

Disordered stretches follow at residues 1–157, 172–239, and 251–317; these read MAKL…CSEP, FHSM…QHLA, and IGTA…PPSP. A compositionally biased stretch (basic and acidic residues) spans 79–92; that stretch reads SRERPGRYPSEDKG. The span at 173 to 186 shows a compositional bias: polar residues; the sequence is HSMQNLCPPQTNGT. Over residues 215–235 the composition is skewed to low complexity; that stretch reads GLSDSGRNSLTSLPTYSSSYS. A compositionally biased stretch (gly residues) spans 258–269; it reads SGSGGSSGGGSG. Residues 274 to 294 show a composition bias toward low complexity; that stretch reads GTSDSGRASSKSGSSSSMGRP. Residues 295-307 show a composition bias toward gly residues; it reads GHLGSGEGGGGGL. 2 positions are modified to phosphoserine: serine 316 and serine 318. 2 coiled-coil regions span residues 317–496 and 571–639; these read PSAL…SLRD and RALR…RLRE. The interval 635–673 is disordered; sequence RRLRERGAAGGASTPTPQHGEEKKAWTPSRLERIESTEI. Residues 653-673 show a composition bias toward basic and acidic residues; that stretch reads HGEEKKAWTPSRLERIESTEI.

It belongs to the LZTS3 family. Interacts (via C-terminus) with SHANK3 (via PDZ domain). Interacts (via coiled coil) with SIPA1L1. Can form homooligomers.

It is found in the synapse. It localises to the postsynaptic density. Its subcellular location is the cell projection. The protein localises to the dendritic spine. The protein resides in the dendrite. It is found in the cytoplasm. It localises to the cytoskeleton. May be involved in promoting the maturation of dendritic spines, probably via regulating SIPA1L1 levels at the postsynaptic density of synapses. In Homo sapiens (Human), this protein is Leucine zipper putative tumor suppressor 3.